The sequence spans 306 residues: MSLYDKSVTATRSAHRTSDTLHSLVAGSVAGGLEIAITYPAEFAKTRLQLNQVSGRNKQNVPWPRFGLQWYSGCIPFLIGNSVKTSIRFVSFDGYQKLLADDDGNISRFGILLAGFGAGATESLLAVTPSERIKTIIIEDRRLEKPRIRNSFHAMSIIARDHGLSGFFQGFWPTTARQSAGSAIRLGSYTFLKQVVQSRTPQGGKIGTVKTFIIGSLAGLITVYLTQPLDTIKTRMQRLEARTRYGNAFICARGILEQEGFTAFWSGAVARSLRLVMSGGIVFMVYEKVVEGLDVISPAKRYEIAA.

Solcar repeat units lie at residues 18-98 (SDTL…YQKL), 109-195 (FGIL…LKQV), and 206-292 (IGTV…VVEG). 6 consecutive transmembrane segments (helical) span residues 24 to 44 (LVAG…AEFA), 67 to 87 (GLQW…KTSI), 113 to 133 (LAGF…SERI), 170 to 189 (GFWP…LGSY), 209 to 229 (VKTF…TQPL), and 267 to 286 (GAVA…FMVY).

It belongs to the mitochondrial carrier (TC 2.A.29) family.

It is found in the mitochondrion inner membrane. The protein operates within mycotoxin biosynthesis. In terms of biological role, tricarboxylate transporter; part of the gene cluster that mediates the biosynthesis of fumonisins B1 (FB1), B2 (FB2), B3 (FB3), and B4 (FB4), which are carcinogenic mycotoxins. Within the pathway, FUM11 is involved the addition of the tricarballylic moieties to the carbon backbone. FUM11 makes a tricarboxylic acid precursor available for fumonisin biosynthesis via its export from the mitochondria. The biosynthesis starts with the FUM1-catalyzed carbon chain assembly from one molecule of acetyl-CoA, eight molecules of malonyl-CoA, and two molecules of methionine (in S-adenosyl form). The C18 polyketide chain is released from the enzyme by a nucleophilic attack of a carbanion, which is derived from R-carbon of alanine by decarboxylation, on the carbonyl carbon of polyketide acyl chain. This step is catalyzed by the pyridoxal 5'-phosphate-dependent aminoacyl transferase FUM8. The resultant 3-keto intermediate is then stereospecifically reduced to a 3-hydroxyl product by reductase FUM13. Subsequent oxidations at C-10 by the cytochrome P450 monooxygenase FUM2, C-14 and C-15 by FUM6, FUM12 or FUM15, tricarballylic esterification of the hydroxyl groups on C-14 and C-15 by acyltransferase FUM14, and C-5 hydroxylation by 2-keto-glutarate-dependent dioxygenase FUM3 furnish the biosynthesis of fumonisins. The tricarballylic moieties are most likely derived from the citric acid cycle, and their addition to the carbon backbone may involve FUM7, FUM10, FUM11 and FUM14. This Gibberella moniliformis (strain M3125 / FGSC 7600) (Maize ear and stalk rot fungus) protein is Tricarboxylate transporter FUM11.